The chain runs to 518 residues: Putative ribose/galactose/methyl galactoside import ATP-binding protein (518 aa).

The interval 1 to 22 (MSIAVLDRPMSRQDTPSASSVP) is disordered. Over residues 12–22 (RQDTPSASSVP) the composition is skewed to polar residues. 2 ABC transporter domains span residues 29–265 (LEVR…VGRE) and 275–515 (VPIG…VMEL). 61–68 (GENGAGKS) serves as a coordination point for ATP.

The protein belongs to the ABC transporter superfamily. Carbohydrate importer 2 (CUT2) (TC 3.A.1.2) family.

It localises to the cell inner membrane. It carries out the reaction D-ribose(out) + ATP + H2O = D-ribose(in) + ADP + phosphate + H(+). It catalyses the reaction D-galactose(out) + ATP + H2O = D-galactose(in) + ADP + phosphate + H(+). Its function is as follows. Part of an ABC transporter complex involved in carbohydrate import. Could be involved in ribose, galactose and/or methyl galactoside import. Responsible for energy coupling to the transport system. This Ralstonia nicotianae (strain ATCC BAA-1114 / GMI1000) (Ralstonia solanacearum) protein is Putative ribose/galactose/methyl galactoside import ATP-binding protein.